The chain runs to 79 residues: Hematopoietic cell signal transducer (79 aa).

The signal sequence occupies residues 1-18 (MVPPGNILFLLLLPVATA). The Extracellular segment spans residues 19 to 35 (QMTPGSCSGCGPLSLPL). A helical transmembrane segment spans residues 36 to 56 (LAGLVAADAVVSLLIVVVVFV). Residues 57-79 (CARLRSRPTQEDDKIYINMPGRG) are Cytoplasmic-facing. Residue Tyr72 is modified to Phosphotyrosine. A GRB2 binding site region spans residues 72-74 (YIN). The PIK3R1 binding site stretch occupies residues 72 to 75 (YINM).

It belongs to the DAP10 family. In terms of assembly, homodimer; Disulfide-linked. Heterohexamer composed of four subunits of HCST/DAP10 and two subunits of KLRK1. Interacts (via transmembrane domain) with KLRK1 (via transmembrane domain); the interaction is required for KLRK1 NK cell surface and induces NK cell-mediated cytotoxicity. Interacts with PIK3R1 and GRB2. Interacts with CLEC5A. Forms an CLEC5A/TYROBP/HCST trimolecular complex depending almost solely on TYROBP. Interacts with KLRK1. Interacts with CD300H. Post-translationally, phosphorylated; PIK3R1 and GRB2 associate specifically with tyrosine-phosphorylated HCST. In terms of processing, O-glycosylated.

The protein localises to the membrane. Transmembrane adapter protein which associates with KLRK1 to form an activation receptor KLRK1-HCST in lymphoid and myeloid cells; this receptor plays a major role in triggering cytotoxicity against target cells expressing cell surface ligands such as MHC class I chain-related MICA and MICB, and UL16-binding proteins (ULBPs); these ligands are up-regulated by stress conditions and pathological state such as viral infection and tumor transformation. Functions as a docking site for PI3-kinase PIK3R1 and GRB2. Interaction of ULBPs with KLRK1-HCST triggers calcium mobilization and activation of the PIK3R1, MAP2K/ERK, and JAK2/STAT5 signaling pathways. Both PIK3R1 and GRB2 are required for full KLRK1-HCST-mediated activation and ultimate killing of target cells. In NK cells, KLRK1-HCST signaling directly induces cytotoxicity and enhances cytokine production initiated via DAP12/TYROBP-associated receptors. In T-cells, it provides primarily costimulation for TCR-induced signals. KLRK1-HCST receptor plays a role in immune surveillance against tumors and is required for cytolysis of tumors cells; indeed, melanoma cells that do not express KLRK1 ligands escape from immune surveillance mediated by NK cells. The protein is Hematopoietic cell signal transducer (HCST) of Bos taurus (Bovine).